The following is a 185-amino-acid chain: Homeobox expressed in ES cells 1 (185 aa).

The disordered stretch occupies residues 32–69; the sequence is KKDCTTSVRPHRPWTDTCGDSEKGGNPPLHAPDLPSET. The homeobox DNA-binding region spans 108-167; the sequence is GRRPRTAFTQNQVEVLENVFRVNCYPGIDIREDLAQKLNLEEDRIQIWFQNRRAKMKRSR.

Belongs to the ANF homeobox family. Can form heterodimers with PROP1 in binding to DNA Interacts with TLE1. In terms of tissue distribution, high levels found in the embryonic liver, lower level expression seen in the viscera, amnion and yolk sac.

The protein localises to the nucleus. Functionally, required for the normal development of the forebrain, eyes and other anterior structures such as the olfactory placodes and pituitary gland. Possible transcriptional repressor. Binds to the palindromic PIII sequence, 5'-AGCTTGAGTCTAATTGAATTAACTGTAC-3'. HESX1 and PROP1 bind as heterodimers on this palindromic site, and, in vitro, HESX1 can antagonize PROP1 activation. In Mus musculus (Mouse), this protein is Homeobox expressed in ES cells 1 (Hesx1).